Consider the following 475-residue polypeptide: tRNA modification GTPase MnmE (475 aa).

Residues Arg-32, Glu-97, and Lys-136 each contribute to the (6S)-5-formyl-5,6,7,8-tetrahydrofolate site. A TrmE-type G domain is found at 232 to 396; the sequence is GVATVIAGRP…LKSRMSSMVE (165 aa). Residues 242 to 247, 261 to 267, 286 to 289, and 377 to 379 contribute to the GTP site; these read NAGKST, SHMPGTT, DTAG, and SAR. Residues Ser-246 and Thr-267 each coordinate Mg(2+). Residue Lys-475 coordinates (6S)-5-formyl-5,6,7,8-tetrahydrofolate.

This sequence belongs to the TRAFAC class TrmE-Era-EngA-EngB-Septin-like GTPase superfamily. TrmE GTPase family. Homodimer. Heterotetramer of two MnmE and two MnmG subunits. K(+) is required as a cofactor.

Its subcellular location is the cytoplasm. In terms of biological role, exhibits a very high intrinsic GTPase hydrolysis rate. Involved in the addition of a carboxymethylaminomethyl (cmnm) group at the wobble position (U34) of certain tRNAs, forming tRNA-cmnm(5)s(2)U34. The sequence is that of tRNA modification GTPase MnmE from Chlorobium phaeobacteroides (strain DSM 266 / SMG 266 / 2430).